We begin with the raw amino-acid sequence, 336 residues long: Glycerol-3-phosphate dehydrogenase [NAD(P)+] (336 aa).

Residues serine 14, tryptophan 15, arginine 35, arginine 36, and lysine 109 each contribute to the NADPH site. The sn-glycerol 3-phosphate site is built by lysine 109 and glycine 139. Alanine 143 is an NADPH binding site. The sn-glycerol 3-phosphate site is built by lysine 194, aspartate 247, serine 257, arginine 258, and asparagine 259. The Proton acceptor role is filled by lysine 194. Arginine 258 contributes to the NADPH binding site. Glutamate 284 serves as a coordination point for NADPH.

This sequence belongs to the NAD-dependent glycerol-3-phosphate dehydrogenase family.

It localises to the cytoplasm. It catalyses the reaction sn-glycerol 3-phosphate + NAD(+) = dihydroxyacetone phosphate + NADH + H(+). The catalysed reaction is sn-glycerol 3-phosphate + NADP(+) = dihydroxyacetone phosphate + NADPH + H(+). It participates in membrane lipid metabolism; glycerophospholipid metabolism. Catalyzes the reduction of the glycolytic intermediate dihydroxyacetone phosphate (DHAP) to sn-glycerol 3-phosphate (G3P), the key precursor for phospholipid synthesis. The protein is Glycerol-3-phosphate dehydrogenase [NAD(P)+] of Streptomyces avermitilis (strain ATCC 31267 / DSM 46492 / JCM 5070 / NBRC 14893 / NCIMB 12804 / NRRL 8165 / MA-4680).